The following is a 708-amino-acid chain: Nicastrin (708 aa).

The N-terminal stretch at 1 to 27 is a signal peptide; sequence MATTRGGSGPDPGSRGLLLLSFSVVLA. Topologically, residues 28–668 are lumenal; it reads GLCGGNSVER…IFLIASKELE (641 aa). Asparagine 44, asparagine 54, and asparagine 128 each carry an N-linked (GlcNAc...) asparagine glycan. Cysteine 49 and cysteine 61 are joined by a disulfide. Cysteine 139 and cysteine 158 are joined by a disulfide. N-linked (GlcNAc...) asparagine glycans are attached at residues asparagine 186 and asparagine 203. Cystine bridges form between cysteine 194-cysteine 212 and cysteine 229-cysteine 247. N-linked (GlcNAc...) asparagine glycans are attached at residues asparagine 263, asparagine 386, asparagine 434, asparagine 463, asparagine 505, asparagine 529, asparagine 561, asparagine 572, asparagine 579, asparagine 593, and asparagine 611. Residues cysteine 585 and cysteine 619 are joined by a disulfide bond. A helical membrane pass occupies residues 669 to 689; the sequence is FITLIVGFSTLVFSLIVTYCI. Over 690-708 the chain is Cytoplasmic; it reads NAKADVLFVAPREPGAVSY.

Belongs to the nicastrin family. Component of the gamma-secretase complex. The functional gamma-secretase complex is composed of at least four polypeptides: a presenilin homodimer (PSEN1 or PSEN2), nicastrin (NCSTN), APH1 (APH1A or APH1B) and PEN2. Binds to proteolytic processed C-terminal fragments C83 and C99 of the amyloid precursor protein (APP). Interacts with PSEN1 and PSEN2. Post-translationally, N-glycosylated.

Its subcellular location is the membrane. The protein resides in the cytoplasmic vesicle membrane. It is found in the melanosome. Essential subunit of the gamma-secretase complex, an endoprotease complex that catalyzes the intramembrane cleavage of integral membrane proteins such as Notch receptors and APP (amyloid-beta precursor protein). The gamma-secretase complex plays a role in Notch and Wnt signaling cascades and regulation of downstream processes via its role in processing key regulatory proteins, and by regulating cytosolic CTNNB1 levels. This is Nicastrin (Ncstn) from Mus musculus (Mouse).